The chain runs to 140 residues: Ribosome maturation factor RimP (140 aa).

It belongs to the RimP family.

Its subcellular location is the cytoplasm. In terms of biological role, required for maturation of 30S ribosomal subunits. This Campylobacter jejuni subsp. jejuni serotype O:23/36 (strain 81-176) protein is Ribosome maturation factor RimP.